Here is a 716-residue protein sequence, read N- to C-terminus: Zinc finger protein 840 (716 aa).

The 72-residue stretch at 42–113 (VRFRDVAVVF…EREVTGDPCP (72 aa)) folds into the KRAB domain. 18 C2H2-type zinc fingers span residues 151 to 173 (YECD…QKIH), 207 to 229 (FECN…QSMH), 235 to 257 (YKCD…QRFH), 277 to 299 (FSCN…LLIH), 305 to 327 (YTCN…QRTH), 333 to 355 (HKCD…QKTH), 361 to 383 (FSCN…QQIH), 389 to 411 (FICS…KGTH), 417 to 439 (YQCT…QKTH), 445 to 467 (FACN…KKIH), 473 to 495 (YECG…KKIH), 501 to 523 (FVCN…QRTH), 549 to 571 (FPCN…QQIH), 577 to 599 (FICS…KGTH), 605 to 627 (YQCT…QKTH), 633 to 655 (FTCN…KKIH), 661 to 683 (YECG…KKIH), and 689 to 711 (FVCN…QITH). Residues 515–548 (KLSRHQRTHNKKENSSKSVSNLNKHQKTHAGEKP) form a disordered region.

Belongs to the krueppel C2H2-type zinc-finger protein family.

The protein localises to the nucleus. Functionally, may be involved in transcriptional regulation. The polypeptide is Zinc finger protein 840 (ZNF840P) (Homo sapiens (Human)).